Consider the following 341-residue polypeptide: Fructose-1,6-bisphosphatase, cytosolic (341 aa).

Mg(2+) contacts are provided by E71, E100, D121, L123, and D124. Residues 124-127 (DGSF), N215, Y247, Y267, and K277 each bind substrate. E283 provides a ligand contact to Mg(2+).

Belongs to the FBPase class 1 family. It depends on Mg(2+) as a cofactor.

Its subcellular location is the cytoplasm. It catalyses the reaction beta-D-fructose 1,6-bisphosphate + H2O = beta-D-fructose 6-phosphate + phosphate. The chain is Fructose-1,6-bisphosphatase, cytosolic from Pisum sativum (Garden pea).